The primary structure comprises 219 residues: GPI-anchored hemophore PGA7 (219 aa).

The first 13 residues, 1 to 13 (MHFIFYLILLVSA), serve as a signal peptide directing secretion. One can recognise a CFEM domain in the interval 17–126 (GNFGTYPKVP…SMLSTAAGDA (110 aa)). 4 disulfide bridges follow: C45–C85, C49–C80, C59–C66, and C68–C101. D63 contacts heme. The segment at 151 to 194 (VVSETGSASETGSSESAQSTTTGSSSTGSSSTDSSSSSSSSPSS) is disordered. Residues 153-194 (SETGSASETGSSESAQSTTTGSSSTGSSSTDSSSSSSSSPSS) are compositionally biased toward low complexity. S194 is lipidated: GPI-anchor amidated serine. The propeptide at 195–219 (SANFAVLQTGGIGSVILGFMMYLLV) is removed in mature form.

This sequence belongs to the RBT5 family. In terms of assembly, interacts with RBT5. Post-translationally, the GPI-anchor is attached to the protein in the endoplasmic reticulum and serves to target the protein to the cell surface. There, the glucosamine-inositol phospholipid moiety is cleaved off and the GPI-modified mannoprotein is covalently attached via its lipidless GPI glycan remnant to the 1,6-beta-glucan of the outer cell wall layer.

The protein resides in the secreted. The protein localises to the cell wall. It localises to the cell membrane. Functionally, GPI-linked hyphal surface heme-binding protein involved in heme-iron utilization. Heme transfer occurs between PGA7, RBT5 and CSA2 supporting a model in which the 3 CFEM proteins cooperate in a heme-acquisition system and form a cross-cell wall heme-transfer cascade. The ability to acquire iron from host tissues is a major virulence factor of pathogenic microorganisms. Required for biofilm formation. The polypeptide is GPI-anchored hemophore PGA7 (Candida albicans (strain SC5314 / ATCC MYA-2876) (Yeast)).